The chain runs to 597 residues: Gigaxonin (597 aa).

The BTB domain occupies 30-99 (CDAHLVLDGE…IFSGQIRLNE (70 aa)). Residues 134 to 236 (CIGIRDFALH…DSSYLREQML (103 aa)) enclose the BACK domain. Kelch repeat units follow at residues 274 to 326 (CIVT…SAEG), 327 to 374 (FLFV…EIDG), 376 to 421 (LYIL…AMKK), 422 to 468 (KIYA…GVAM), 470 to 522 (LYVF…VYGA), and 528 to 574 (SIYV…AALR).

As to quaternary structure, interacts with TBCB. Interacts with CUL3. Part of a complex that contains CUL3, RBX1 and GAN. Interacts (via BTB domain) with UBA1. Interacts (via Kelch domains) with MAP1B (via C-terminus) and MAP1S (via C-terminus). Ubiquitinated by E3 ubiquitin ligase complex formed by CUL3 and RBX1 and probably targeted for proteasome-independent degradation. In terms of tissue distribution, expressed in brain, heart and muscle.

It is found in the cytoplasm. The protein localises to the cytoskeleton. Its pathway is protein modification; protein ubiquitination. In terms of biological role, probable cytoskeletal component that directly or indirectly plays an important role in neurofilament architecture. May act as a substrate-specific adapter of an E3 ubiquitin-protein ligase complex which mediates the ubiquitination and subsequent proteasomal degradation of target proteins. Controls degradation of TBCB. Controls degradation of MAP1B and MAP1S, and is critical for neuronal maintenance and survival. This Homo sapiens (Human) protein is Gigaxonin (GAN).